The following is a 315-amino-acid chain: Ribosomal RNA small subunit methyltransferase H (315 aa).

S-adenosyl-L-methionine-binding positions include 37 to 39, D57, F83, D105, and Q112; that span reads GGH.

It belongs to the methyltransferase superfamily. RsmH family.

It localises to the cytoplasm. It carries out the reaction cytidine(1402) in 16S rRNA + S-adenosyl-L-methionine = N(4)-methylcytidine(1402) in 16S rRNA + S-adenosyl-L-homocysteine + H(+). Functionally, specifically methylates the N4 position of cytidine in position 1402 (C1402) of 16S rRNA. This chain is Ribosomal RNA small subunit methyltransferase H, found in Pseudomonas fluorescens (strain SBW25).